Here is a 508-residue protein sequence, read N- to C-terminus: Photosystem II CP47 reaction center protein (508 aa).

The next 6 membrane-spanning stretches (helical) occupy residues 21–36 (AVHL…WAGS), 101–115 (IILS…IWHW), 140–156 (GIHL…FGAF), 203–218 (IAAG…FHLS), 237–252 (VLSS…AFVV), and 457–472 (NFAL…HGSR).

This sequence belongs to the PsbB/PsbC family. PsbB subfamily. As to quaternary structure, PSII is composed of 1 copy each of membrane proteins PsbA, PsbB, PsbC, PsbD, PsbE, PsbF, PsbH, PsbI, PsbJ, PsbK, PsbL, PsbM, PsbT, PsbX, PsbY, PsbZ, Psb30/Ycf12, at least 3 peripheral proteins of the oxygen-evolving complex and a large number of cofactors. It forms dimeric complexes. Binds multiple chlorophylls. PSII binds additional chlorophylls, carotenoids and specific lipids. serves as cofactor.

Its subcellular location is the plastid. It localises to the chloroplast thylakoid membrane. In terms of biological role, one of the components of the core complex of photosystem II (PSII). It binds chlorophyll and helps catalyze the primary light-induced photochemical processes of PSII. PSII is a light-driven water:plastoquinone oxidoreductase, using light energy to abstract electrons from H(2)O, generating O(2) and a proton gradient subsequently used for ATP formation. This chain is Photosystem II CP47 reaction center protein, found in Staurastrum punctulatum (Green alga).